A 779-amino-acid chain; its full sequence is Vezatin (779 aa).

2 helical membrane-spanning segments follow: residues 139–159 and 162–182; these read LATP…LLVM and TWWI…YLVI. Residues 430-462 adopt a coiled-coil conformation; the sequence is VRSLQLHLKALLNEVIILEDELEKLVCTKETQE. Disordered regions lie at residues 618 to 719 and 757 to 779; these read PVDP…DSLQ and EQTF…IEEK. A compositionally biased stretch (polar residues) spans 625-634; the sequence is ISNSEPSMNS. Positions 638–649 are enriched in basic and acidic residues; the sequence is KVSKNDTEEESN. Residues 706–719 show a composition bias toward polar residues; sequence GLTTAPPTPRDSLQ. Basic and acidic residues predominate over residues 770–779; it reads EENKNEIEEK.

This sequence belongs to the vezatin family. In terms of assembly, interacts with USH2A (via the cytoplasmic region); the interaction associates VEZT with the USH2 complex at the stereocilia base. Interacts with myosin MYO7A and the cadherin-catenins complex.

It is found in the cell membrane. The protein localises to the cell projection. It localises to the stereocilium membrane. The protein resides in the cell junction. Its subcellular location is the adherens junction. It is found in the nucleus. The protein localises to the cytoplasmic vesicle. It localises to the secretory vesicle. The protein resides in the acrosome. In terms of biological role, plays a pivotal role in the establishment of adherens junctions and their maintenance in adult life. Required for morphogenesis of the preimplantation embryo, and for the implantation process. (Microbial infection) In case of Listeria infection, promotes bacterial internalization by participating in myosin VIIa recruitment to the entry site. The sequence is that of Vezatin (VEZT) from Homo sapiens (Human).